Reading from the N-terminus, the 359-residue chain is Phospho-N-acetylmuramoyl-pentapeptide-transferase (359 aa).

Helical transmembrane passes span 3-23 (LILI…PALI), 55-75 (VAIL…GMAM), 80-100 (PSAS…VGFI), 117-137 (TAKT…ALQF), 156-176 (IATV…VVSA), 187-207 (LDGL…LITF), 231-251 (LALV…WNAA), 255-275 (IFMG…ISVT), 280-300 (ILAV…VVQI), and 334-354 (FWLL…GEWL).

Belongs to the glycosyltransferase 4 family. MraY subfamily. Requires Mg(2+) as cofactor.

Its subcellular location is the cell membrane. The enzyme catalyses UDP-N-acetyl-alpha-D-muramoyl-L-alanyl-gamma-D-glutamyl-meso-2,6-diaminopimeloyl-D-alanyl-D-alanine + di-trans,octa-cis-undecaprenyl phosphate = di-trans,octa-cis-undecaprenyl diphospho-N-acetyl-alpha-D-muramoyl-L-alanyl-D-glutamyl-meso-2,6-diaminopimeloyl-D-alanyl-D-alanine + UMP. The protein operates within cell wall biogenesis; peptidoglycan biosynthesis. Its function is as follows. Catalyzes the initial step of the lipid cycle reactions in the biosynthesis of the cell wall peptidoglycan: transfers peptidoglycan precursor phospho-MurNAc-pentapeptide from UDP-MurNAc-pentapeptide onto the lipid carrier undecaprenyl phosphate, yielding undecaprenyl-pyrophosphoryl-MurNAc-pentapeptide, known as lipid I. This is Phospho-N-acetylmuramoyl-pentapeptide-transferase from Mycolicibacterium smegmatis (strain ATCC 700084 / mc(2)155) (Mycobacterium smegmatis).